The primary structure comprises 393 residues: Arrestin-C (393 aa).

A compositionally biased stretch (basic and acidic residues) spans 371–386 (FARQEDGGEEKQKALA). The interval 371–393 (FARQEDGGEEKQKALAEEGDEGS) is disordered.

It belongs to the arrestin family. In terms of assembly, homodimer; disulfide-linked in response to retinal illumination. Interacts with CXCR4; the interaction is dependent on the C-terminal phosphorylation of CXCR4 and modulates the calcium ion mobilization activity of CXCR4.

It localises to the photoreceptor inner segment. It is found in the cell projection. The protein resides in the cilium. The protein localises to the photoreceptor outer segment. Functionally, may play a role in an as yet undefined retina-specific signal transduction. Could bind to photoactivated-phosphorylated red/green opsins. This is Arrestin-C (ARR3) from Ictidomys tridecemlineatus (Thirteen-lined ground squirrel).